The sequence spans 341 residues: Terpene synthase 9 (341 aa).

Positions 81 to 86 (DDILDS) match the DDxx(x)D/E motif motif. An NDxxSxxxD/E motif motif is present at residues 222-230 (NDMASYCKE).

It belongs to the terpene synthase family.

It catalyses the reaction (2E,6E)-farnesyl diphosphate = (1S,2S,4R)-beta-elemene + diphosphate. The catalysed reaction is (2E,6E)-farnesyl diphosphate = germacrene D + diphosphate. Terpene synthase that converts its substrate farnesyl diphosphate (FPP) into the sesquiterpenes beta-elemene, germacrene D and a yet unidentified sesquiterpene. This is Terpene synthase 9 from Dictyostelium purpureum (Slime mold).